The following is a 714-amino-acid chain: VIN3-like protein 2 (714 aa).

The segment at Arg164–Ala232 adopts a PHD-type zinc-finger fold. Residues Trp239–Ala246 carry the Nuclear localization signal motif. The 98-residue stretch at Gly366–Glu463 folds into the Fibronectin type-III domain. Polar residues predominate over residues Leu478 to Asp498. The tract at residues Leu478–Asp530 is disordered. A VIN3-Interacting Domain (VID) region spans residues Ser602 to His714.

Self-interacts. Interacts with VIN3 and VIL1. Component of the plant homeodomain / polycomb repressive complex 2 (PHD-PRC2) large complex during prolonged cold, composed of core PRC2 components (VRN2, EZA1, FIE and MSI1), and three related PHD finger proteins (VIL1, VIL2 and VIN3) that mediates histone H3 trimethylation on 'Lys-27' (H3K27me3).

The protein localises to the nucleus. Its function is as follows. Maybe involved in both the vernalization and photoperiod pathways by regulating gene expression. Binds preferentially to dimethylated histone H3 'Lys-9' (H3K9me2). Promotes flowering in non-inductive photoperiods (e.g. short days) through the maintenance of the epigenetically repressed state of MAF5 via H3K9me2 and plant homeodomain / polycomb repressive complex 2 (PHD-PRC2)-dependent H3K27me3. This chain is VIN3-like protein 2 (VIL2), found in Arabidopsis thaliana (Mouse-ear cress).